Here is a 137-residue protein sequence, read N- to C-terminus: Large-conductance mechanosensitive channel (137 aa).

The next 2 membrane-spanning stretches (helical) occupy residues 10 to 30 (FAMR…AAFG) and 76 to 96 (GVFI…FMAI).

It belongs to the MscL family. Homopentamer.

It localises to the cell inner membrane. In terms of biological role, channel that opens in response to stretch forces in the membrane lipid bilayer. May participate in the regulation of osmotic pressure changes within the cell. This Enterobacter sp. (strain 638) protein is Large-conductance mechanosensitive channel.